Consider the following 204-residue polypeptide: High frequency lysogenization protein HflD homolog (204 aa).

The protein belongs to the HflD family.

The protein localises to the cytoplasm. Its subcellular location is the cell inner membrane. The protein is High frequency lysogenization protein HflD homolog of Shewanella amazonensis (strain ATCC BAA-1098 / SB2B).